A 582-amino-acid chain; its full sequence is A-type ATP synthase subunit A 1 (582 aa).

231–238 (GPFGSGKT) serves as a coordination point for ATP.

This sequence belongs to the ATPase alpha/beta chains family. In terms of assembly, has multiple subunits with at least A(3), B(3), C, D, E, F, H, I and proteolipid K(x).

Its subcellular location is the cell membrane. It catalyses the reaction ATP + H2O + 4 H(+)(in) = ADP + phosphate + 5 H(+)(out). Component of the A-type ATP synthase that produces ATP from ADP in the presence of a proton gradient across the membrane. The A chain is the catalytic subunit. In Methanospirillum hungatei JF-1 (strain ATCC 27890 / DSM 864 / NBRC 100397 / JF-1), this protein is A-type ATP synthase subunit A 1.